Here is a 236-residue protein sequence, read N- to C-terminus: UPF0502 protein Bamb_4889 (236 aa).

The protein belongs to the UPF0502 family.

The polypeptide is UPF0502 protein Bamb_4889 (Burkholderia ambifaria (strain ATCC BAA-244 / DSM 16087 / CCUG 44356 / LMG 19182 / AMMD) (Burkholderia cepacia (strain AMMD))).